Here is a 391-residue protein sequence, read N- to C-terminus: Stearoyl-[acyl-carrier-protein] 9-desaturase 6, chloroplastic (391 aa).

Residues 1–38 (MLAHKSLLSFTTQWATLMPSPSTFLASRPRGPAKISAV) constitute a chloroplast transit peptide. Residues Glu-130, Glu-168, His-171, Glu-221, Glu-254, and His-257 each contribute to the Fe cation site.

It belongs to the fatty acid desaturase type 2 family. Homodimer. Requires Fe(2+) as cofactor.

It localises to the plastid. Its subcellular location is the chloroplast. It carries out the reaction octadecanoyl-[ACP] + 2 reduced [2Fe-2S]-[ferredoxin] + O2 + 2 H(+) = (9Z)-octadecenoyl-[ACP] + 2 oxidized [2Fe-2S]-[ferredoxin] + 2 H2O. It participates in lipid metabolism; fatty acid metabolism. In terms of biological role, converts stearoyl-ACP to oleoyl-ACP by introduction of a cis double bond between carbons 9 and 10 of the acyl chain. This chain is Stearoyl-[acyl-carrier-protein] 9-desaturase 6, chloroplastic (S-ACP-DES6), found in Arabidopsis thaliana (Mouse-ear cress).